Reading from the N-terminus, the 107-residue chain is Nucleoid-associated protein Mlg_1509 (107 aa).

The protein belongs to the YbaB/EbfC family. As to quaternary structure, homodimer.

Its subcellular location is the cytoplasm. It is found in the nucleoid. Functionally, binds to DNA and alters its conformation. May be involved in regulation of gene expression, nucleoid organization and DNA protection. The chain is Nucleoid-associated protein Mlg_1509 from Alkalilimnicola ehrlichii (strain ATCC BAA-1101 / DSM 17681 / MLHE-1).